The following is a 699-amino-acid chain: Elongation factor G (699 aa).

Residues 10 to 292 (NRTRNIGIMA…AVIDYLPSPT (283 aa)) enclose the tr-type G domain. GTP-binding positions include 19 to 26 (AHIDAGKT), 90 to 94 (DTPGH), and 144 to 147 (NKMD). The segment at 292–312 (TDVPAIRGEEDDGSEGSRSAS) is disordered.

Belongs to the TRAFAC class translation factor GTPase superfamily. Classic translation factor GTPase family. EF-G/EF-2 subfamily.

It localises to the cytoplasm. Its function is as follows. Catalyzes the GTP-dependent ribosomal translocation step during translation elongation. During this step, the ribosome changes from the pre-translocational (PRE) to the post-translocational (POST) state as the newly formed A-site-bound peptidyl-tRNA and P-site-bound deacylated tRNA move to the P and E sites, respectively. Catalyzes the coordinated movement of the two tRNA molecules, the mRNA and conformational changes in the ribosome. In Coxiella burnetii (strain CbuG_Q212) (Coxiella burnetii (strain Q212)), this protein is Elongation factor G.